The sequence spans 396 residues: MAQLLDSPGFIERSAAVPHKAAAAPATRDAAAPAAVPGAAVSFELVGKVFDGPRGPAAALREVTLDIARGGVFGVIGRSGAGKSTLLRLVNGLERPTSGAVRVNGVDVGTLDERGLVALRRRIGMVFQHFNLLSAKTVAQNIGLPLKIAGVPKAERARKVDALLDLVGLAAKRDAYPASLSGGQKQRVGIARALVHDPALLLCDEATSALDPETTQSILALLADINRRLGLTIMLITHEMEVIRAVCDTVAVVEQGEVVETGPVWRVFGDPRHGATRALLRTLAHDLPADLAARLRPLDGAAPLPCGAQLLLDVRYTGASGGEPDLGALTAALARNVGDAVHFVHGGLDRIQGRVQGRLVIAASLAARGAASPDRIAAALAAARRHANRVEVLGYV.

The 240-residue stretch at V41–L280 folds into the ABC transporter domain. G77 to S84 contributes to the ATP binding site.

This sequence belongs to the ABC transporter superfamily. Methionine importer (TC 3.A.1.24) family. In terms of assembly, the complex is composed of two ATP-binding proteins (MetN), two transmembrane proteins (MetI) and a solute-binding protein (MetQ).

It localises to the cell inner membrane. The enzyme catalyses L-methionine(out) + ATP + H2O = L-methionine(in) + ADP + phosphate + H(+). It catalyses the reaction D-methionine(out) + ATP + H2O = D-methionine(in) + ADP + phosphate + H(+). Part of the ABC transporter complex MetNIQ involved in methionine import. Responsible for energy coupling to the transport system. In Burkholderia pseudomallei (strain 1710b), this protein is Methionine import ATP-binding protein MetN 2.